A 361-amino-acid polypeptide reads, in one-letter code: tRNA/tmRNA (uracil-C(5))-methyltransferase (361 aa).

Residues glutamine 183, tyrosine 211, asparagine 216, glutamate 232, and aspartate 294 each contribute to the S-adenosyl-L-methionine site. Residue cysteine 319 is the Nucleophile of the active site. Glutamate 353 serves as the catalytic Proton acceptor.

The protein belongs to the class I-like SAM-binding methyltransferase superfamily. RNA M5U methyltransferase family. TrmA subfamily.

It catalyses the reaction uridine(54) in tRNA + S-adenosyl-L-methionine = 5-methyluridine(54) in tRNA + S-adenosyl-L-homocysteine + H(+). The catalysed reaction is uridine(341) in tmRNA + S-adenosyl-L-methionine = 5-methyluridine(341) in tmRNA + S-adenosyl-L-homocysteine + H(+). In terms of biological role, dual-specificity methyltransferase that catalyzes the formation of 5-methyluridine at position 54 (m5U54) in all tRNAs, and that of position 341 (m5U341) in tmRNA (transfer-mRNA). The protein is tRNA/tmRNA (uracil-C(5))-methyltransferase of Acinetobacter baumannii (strain AYE).